Consider the following 66-residue polypeptide: Large ribosomal subunit protein bL33c (66 aa).

The protein belongs to the bacterial ribosomal protein bL33 family.

The protein resides in the plastid. It localises to the chloroplast. In Barbarea verna (Land cress), this protein is Large ribosomal subunit protein bL33c.